We begin with the raw amino-acid sequence, 262 residues long: Cytochrome c oxidase subunit 3 (262 aa).

The next 7 membrane-spanning stretches (helical) occupy residues 13-33 (PWPL…VMYM), 38-58 (GGGL…YVWW), 82-102 (GMLL…WAFF), 134-154 (TIIL…ILAG), 159-179 (GIIS…FQAL), 200-220 (ATGF…VCLF), and 237-257 (AAAW…VCIY).

This sequence belongs to the cytochrome c oxidase subunit 3 family. Component of the cytochrome c oxidase (complex IV, CIV), a multisubunit enzyme composed of a catalytic core of 3 subunits and several supernumerary subunits. The complex exists as a monomer or a dimer and forms supercomplexes (SCs) in the inner mitochondrial membrane with ubiquinol-cytochrome c oxidoreductase (cytochrome b-c1 complex, complex III, CIII).

The protein resides in the mitochondrion inner membrane. The enzyme catalyses 4 Fe(II)-[cytochrome c] + O2 + 8 H(+)(in) = 4 Fe(III)-[cytochrome c] + 2 H2O + 4 H(+)(out). In terms of biological role, component of the cytochrome c oxidase, the last enzyme in the mitochondrial electron transport chain which drives oxidative phosphorylation. The respiratory chain contains 3 multisubunit complexes succinate dehydrogenase (complex II, CII), ubiquinol-cytochrome c oxidoreductase (cytochrome b-c1 complex, complex III, CIII) and cytochrome c oxidase (complex IV, CIV), that cooperate to transfer electrons derived from NADH and succinate to molecular oxygen, creating an electrochemical gradient over the inner membrane that drives transmembrane transport and the ATP synthase. Cytochrome c oxidase is the component of the respiratory chain that catalyzes the reduction of oxygen to water. Electrons originating from reduced cytochrome c in the intermembrane space (IMS) are transferred via the dinuclear copper A center (CU(A)) of subunit 2 and heme A of subunit 1 to the active site in subunit 1, a binuclear center (BNC) formed by heme A3 and copper B (CU(B)). The BNC reduces molecular oxygen to 2 water molecules using 4 electrons from cytochrome c in the IMS and 4 protons from the mitochondrial matrix. This is Cytochrome c oxidase subunit 3 (COX3) from Prototheca wickerhamii.